Here is a 541-residue protein sequence, read N- to C-terminus: Glucose-6-phosphate isomerase (541 aa).

Residue glutamate 346 is the Proton donor of the active site. Active-site residues include histidine 377 and lysine 506.

Belongs to the GPI family.

It localises to the cytoplasm. The catalysed reaction is alpha-D-glucose 6-phosphate = beta-D-fructose 6-phosphate. The protein operates within carbohydrate biosynthesis; gluconeogenesis. Its pathway is carbohydrate degradation; glycolysis; D-glyceraldehyde 3-phosphate and glycerone phosphate from D-glucose: step 2/4. Catalyzes the reversible isomerization of glucose-6-phosphate to fructose-6-phosphate. The chain is Glucose-6-phosphate isomerase from Rhizobium etli (strain CIAT 652).